The chain runs to 75 residues: Penaeidin-3k (75 aa).

The N-terminal stretch at 1–19 (MRLVVCLVFLASFALVCQG) is a signal peptide. Gln20 carries the post-translational modification Pyrrolidone carboxylic acid. Cystine bridges form between Cys44–Cys59, Cys48–Cys66, and Cys60–Cys67. Position 74 is a serine amide (Ser74).

Belongs to the penaeidin family.

The protein localises to the cytoplasmic granule. Its function is as follows. Antibacterial and antifungal activity. Presents chitin-binding activity. The polypeptide is Penaeidin-3k (Penaeus setiferus (Atlantic white shrimp)).